The following is a 171-amino-acid chain: Cytochrome c-type biogenesis protein CcmE (171 aa).

The Cytoplasmic portion of the chain corresponds to 1–7 (MNRKQKR). Residues 8-28 (LAVIAGGMGFIAAAVLLVMFA) traverse the membrane as a helical; Signal-anchor for type II membrane protein segment. At 29 to 171 (FSQSVAYFYM…NPGEEAKATQ (143 aa)) the chain is on the periplasmic side. H124 and Y128 together coordinate heme. The segment at 132 to 171 (DVADRLKQQGLWKEGQGGQESPGKEGQGQENPGEEAKATQ) is disordered.

The protein belongs to the CcmE/CycJ family.

It is found in the cell inner membrane. Functionally, heme chaperone required for the biogenesis of c-type cytochromes. Transiently binds heme delivered by CcmC and transfers the heme to apo-cytochromes in a process facilitated by CcmF and CcmH. The sequence is that of Cytochrome c-type biogenesis protein CcmE from Rhizobium leguminosarum bv. trifolii (strain WSM2304).